Consider the following 349-residue polypeptide: Heparin sulfate O-sulfotransferase (349 aa).

At 1–17 (MFRKLLKMWILLRPTHW) the chain is on the cytoplasmic side. A helical; Signal-anchor for type II membrane protein transmembrane segment spans residues 18-38 (LILIALCAVTCAGYWLLWSEI). Residues 39–349 (RLEHAFKPLS…KFMYEKIRPK (311 aa)) lie on the Lumenal side of the membrane. 2 N-linked (GlcNAc...) asparagine glycosylation sites follow: Asn107 and Asn126. Catalysis depends on residues His139 and His141. 2 cysteine pairs are disulfide-bonded: Cys200–Cys208 and Cys221–Cys227. An N-linked (GlcNAc...) asparagine glycan is attached at Asn282.

The protein belongs to the sulfotransferase 3 family. Homotrimer.

The protein localises to the golgi apparatus membrane. Its function is as follows. Catalyzes the transfer of sulfate to the C2-position of selected hexuronic acid residues within the maturing heparan sulfate (HS). In Drosophila melanogaster (Fruit fly), this protein is Heparin sulfate O-sulfotransferase.